An 81-amino-acid polypeptide reads, in one-letter code: uncharacterized protein (81 aa).

The segment at 1–58 (MPQSKQQFKRQGARQRDSKGKFVKARTGMATAPPAAVSTAAPTASTMTPTGSSTTATI) is disordered. Residues 30–58 (ATAPPAAVSTAAPTASTMTPTGSSTTATI) are compositionally biased toward low complexity.

This is an uncharacterized protein from Caenorhabditis elegans.